The sequence spans 184 residues: UPF0397 protein SAOUHSC_03020 (184 aa).

The next 5 membrane-spanning stretches (helical) occupy residues 11-31 (VVAIGIGAAVFVILGRFVVIP), 44-64 (AFLALISAIFGPFAGLMTGLV), 77-97 (AWWSWVICSGIIGCLYGWIGL), 116-136 (IGQIIANIICWALIAPTLDIL), and 148-168 (QGVISAVLNIISVGIIGTILL).

Belongs to the UPF0397 family.

The protein localises to the cell membrane. The protein is UPF0397 protein SAOUHSC_03020 of Staphylococcus aureus (strain NCTC 8325 / PS 47).